Consider the following 269-residue polypeptide: MTPLQILISNDDGVLAEGVRCLAAAAASRGHRVTVVCPDHERSATGHGLTIHTPIRAERVDELYGPGVKAWSCSGTPADCVKLALSELLAEKPDLVLSGVNHGPNLGTDVFCSGTVAAAMEGTLEGLPALAVSVACFQWRDFQAAAQLAMDVAENALADHWPNNLLLNLNIPPCHLEQMGSLRWTRLSIRHYEEQFSRRVDPHSRTYFWLAGEVVKDLETAGDGPRDWPSDVAQIETNSPSLTPIQPDLFWRGDLSALPAACVANQPVR.

Positions 11, 12, 43, and 101 each coordinate a divalent metal cation.

The protein belongs to the SurE nucleotidase family. Requires a divalent metal cation as cofactor.

It localises to the cytoplasm. It catalyses the reaction a ribonucleoside 5'-phosphate + H2O = a ribonucleoside + phosphate. Its function is as follows. Nucleotidase that shows phosphatase activity on nucleoside 5'-monophosphates. The chain is 5'-nucleotidase SurE from Prochlorococcus marinus (strain MIT 9313).